The following is a 1758-amino-acid chain: Y' element ATP-dependent helicase YJL225C (1758 aa).

In terms of domain architecture, Helicase ATP-binding spans 668 to 845 (EIYMADTPSV…LQRIGLTGLA (178 aa)). 681-688 (APPGYGKT) provides a ligand contact to ATP. The 152-residue stretch at 900–1051 (ALKLLLALFE…EFYGLESKKG (152 aa)) folds into the Helicase C-terminal domain. The segment covering 1142–1360 (NVRTNATTNA…ATTTESTNAS (219 aa)) has biased composition (low complexity). The disordered stretch occupies residues 1142-1384 (NVRTNATTNA…RFHPVTDINK (243 aa)). A compositionally biased stretch (basic and acidic residues) spans 1361–1384 (AKEDANKDGNAEDNRFHPVTDINK).

This sequence belongs to the helicase family. Yeast subtelomeric Y' repeat subfamily.

In terms of biological role, catalyzes DNA unwinding and is involved in telomerase-independent telomere maintenance. The chain is Y' element ATP-dependent helicase YJL225C from Saccharomyces cerevisiae (strain ATCC 204508 / S288c) (Baker's yeast).